The sequence spans 391 residues: Mannose-6-phosphate isomerase (391 aa).

Zn(2+) is bound by residues glutamine 97, histidine 99, glutamate 134, and histidine 255. The active site involves arginine 274.

It belongs to the mannose-6-phosphate isomerase type 1 family. Zn(2+) is required as a cofactor.

The protein resides in the cytoplasm. The catalysed reaction is D-mannose 6-phosphate = D-fructose 6-phosphate. In terms of biological role, involved in the conversion of glucose to GDP-L-fucose, which can be converted to L-fucose, a capsular polysaccharide. The polypeptide is Mannose-6-phosphate isomerase (manA) (Salmonella typhimurium (strain LT2 / SGSC1412 / ATCC 700720)).